Consider the following 451-residue polypeptide: Jacalin-related lectin 35 (451 aa).

The residue at position 2 (Ala2) is an N-acetylalanine. 3 consecutive Jacalin-type lectin domains span residues 2–143, 156–297, and 306–448; these read AKKL…YIIP, LTKL…YIIP, and SNTI…NVAP.

The protein belongs to the jacalin lectin family. As to quaternary structure, component of the PYK10 complex, at least composed of PYK10/BGLU23, BGLU21, BGLU22, JAL22, JAL23, PBP1/JAL30, PBP2/JAL31, JAL32, JAL33, JAL34, JAL35, GLL22 and GLL23.

This is Jacalin-related lectin 35 (JAL35) from Arabidopsis thaliana (Mouse-ear cress).